We begin with the raw amino-acid sequence, 510 residues long: Lysine--tRNA ligase (510 aa).

The Mg(2+) site is built by Glu420 and Glu427.

Belongs to the class-II aminoacyl-tRNA synthetase family. In terms of assembly, homodimer. Mg(2+) serves as cofactor.

The protein resides in the cytoplasm. The enzyme catalyses tRNA(Lys) + L-lysine + ATP = L-lysyl-tRNA(Lys) + AMP + diphosphate. In Ralstonia nicotianae (strain ATCC BAA-1114 / GMI1000) (Ralstonia solanacearum), this protein is Lysine--tRNA ligase.